The chain runs to 252 residues: Type III pantothenate kinase (252 aa).

6–13 provides a ligand contact to ATP; that stretch reads DIGNTNTV. Residue 105–108 participates in substrate binding; that stretch reads GADR. Catalysis depends on D107, which acts as the Proton acceptor. D127 contributes to the K(+) binding site. Residue T130 participates in ATP binding. T182 serves as a coordination point for substrate.

It belongs to the type III pantothenate kinase family. Homodimer. NH4(+) is required as a cofactor. The cofactor is K(+).

The protein resides in the cytoplasm. It catalyses the reaction (R)-pantothenate + ATP = (R)-4'-phosphopantothenate + ADP + H(+). It functions in the pathway cofactor biosynthesis; coenzyme A biosynthesis; CoA from (R)-pantothenate: step 1/5. Its function is as follows. Catalyzes the phosphorylation of pantothenate (Pan), the first step in CoA biosynthesis. The sequence is that of Type III pantothenate kinase from Salinispora arenicola (strain CNS-205).